The following is a 58-amino-acid chain: Large ribosomal subunit protein bL33 (58 aa).

The protein belongs to the bacterial ribosomal protein bL33 family.

This chain is Large ribosomal subunit protein bL33, found in Brachyspira hyodysenteriae (strain ATCC 49526 / WA1).